A 328-amino-acid chain; its full sequence is uncharacterized protein (328 aa).

An SIS domain is found at 37–179 (LTEKLLCHQG…AMTLLRCRKI (143 aa)). 52 to 57 (GIGKSG) provides a ligand contact to ATP. CBS domains lie at 207–264 (PRTE…GGDI) and 273–328 (MTRN…AGLL).

It belongs to the SIS family. GutQ/KpsF subfamily.

This is an uncharacterized protein from Chlamydia trachomatis serovar D (strain ATCC VR-885 / DSM 19411 / UW-3/Cx).